The primary structure comprises 284 residues: 2-dehydro-3-deoxyphosphooctonate aldolase (284 aa).

The protein belongs to the KdsA family.

It localises to the cytoplasm. The catalysed reaction is D-arabinose 5-phosphate + phosphoenolpyruvate + H2O = 3-deoxy-alpha-D-manno-2-octulosonate-8-phosphate + phosphate. It participates in carbohydrate biosynthesis; 3-deoxy-D-manno-octulosonate biosynthesis; 3-deoxy-D-manno-octulosonate from D-ribulose 5-phosphate: step 2/3. Its pathway is bacterial outer membrane biogenesis; lipopolysaccharide biosynthesis. The polypeptide is 2-dehydro-3-deoxyphosphooctonate aldolase (Mannheimia succiniciproducens (strain KCTC 0769BP / MBEL55E)).